The following is a 118-amino-acid chain: UPF0295 protein BCG9842_B4782 (118 aa).

A run of 2 helical transmembrane segments spans residues 12–32 (IRTFALSLVFIGLFIAYLGVF) and 43–63 (FMMVGFLAVIASTVVYFWIGM).

The protein belongs to the UPF0295 family.

The protein resides in the cell membrane. The chain is UPF0295 protein BCG9842_B4782 from Bacillus cereus (strain G9842).